The chain runs to 35 residues: Malate dehydrogenase, mitochondrial (35 aa).

Asn7 lines the NAD(+) pocket. Arg23 lines the substrate pocket.

It belongs to the LDH/MDH superfamily. MDH type 1 family. As to quaternary structure, homodimer.

The protein resides in the mitochondrion matrix. The catalysed reaction is (S)-malate + NAD(+) = oxaloacetate + NADH + H(+). This chain is Malate dehydrogenase, mitochondrial, found in Capsicum annuum var. annuum (Red pepper).